The primary structure comprises 229 residues: Potassium/proton antiporter CemA (229 aa).

The next 3 membrane-spanning stretches (helical) occupy residues 7 to 27 (LNPL…SLSF), 106 to 126 (IILH…YSIL), and 189 to 209 (IISG…KYWI).

The protein belongs to the CemA family.

It localises to the plastid. Its subcellular location is the chloroplast inner membrane. It catalyses the reaction K(+)(in) + H(+)(out) = K(+)(out) + H(+)(in). In terms of biological role, contributes to K(+)/H(+) antiport activity by supporting proton efflux to control proton extrusion and homeostasis in chloroplasts in a light-dependent manner to modulate photosynthesis. Prevents excessive induction of non-photochemical quenching (NPQ) under continuous-light conditions. Indirectly promotes efficient inorganic carbon uptake into chloroplasts. This chain is Potassium/proton antiporter CemA, found in Nymphaea alba (White water-lily).